Consider the following 113-residue polypeptide: Cell cycle control protein 50C (113 aa).

The Cytoplasmic segment spans residues 1–34; the sequence is MEERAQHCLSRLLDNSALKQQELPIHRLYFTARR. Residues 35–55 traverse the membrane as a helical segment; it reads VLFVFFATGIFCLCMGIILIL. Residues 56–113 lie on the Extracellular side of the membrane; sequence SARSTQEIEINYTRICANCAKLRENASNFDKECTCSIPFYLSGKMMVGEIQETRLTLH. Asn66 carries N-linked (GlcNAc...) asparagine glycosylation.

It belongs to the CDC50/LEM3 family. Specifically expressed in testis.

The protein localises to the membrane. This is Cell cycle control protein 50C from Homo sapiens (Human).